The primary structure comprises 341 residues: L-threonine 3-dehydrogenase (341 aa).

Zn(2+) is bound at residue Cys38. Catalysis depends on charge relay system residues Thr40 and His43. The Zn(2+) site is built by His63, Glu64, Cys93, Cys96, Cys99, and Cys107. Residues Ile175, Asp195, Arg200, 262–264, and 286–287 each bind NAD(+); these read LGI and IY.

Belongs to the zinc-containing alcohol dehydrogenase family. In terms of assembly, homotetramer. It depends on Zn(2+) as a cofactor.

It is found in the cytoplasm. The catalysed reaction is L-threonine + NAD(+) = (2S)-2-amino-3-oxobutanoate + NADH + H(+). Its pathway is amino-acid degradation; L-threonine degradation via oxydo-reductase pathway; glycine from L-threonine: step 1/2. Catalyzes the NAD(+)-dependent oxidation of L-threonine to 2-amino-3-ketobutyrate. The polypeptide is L-threonine 3-dehydrogenase (Klebsiella pneumoniae subsp. pneumoniae (strain ATCC 700721 / MGH 78578)).